Consider the following 211-residue polypeptide: Urease accessory protein UreG (211 aa).

11 to 18 (GPVGAGKT) provides a ligand contact to GTP.

This sequence belongs to the SIMIBI class G3E GTPase family. UreG subfamily. In terms of assembly, homodimer. UreD, UreF and UreG form a complex that acts as a GTP-hydrolysis-dependent molecular chaperone, activating the urease apoprotein by helping to assemble the nickel containing metallocenter of UreC. The UreE protein probably delivers the nickel.

The protein resides in the cytoplasm. In terms of biological role, facilitates the functional incorporation of the urease nickel metallocenter. This process requires GTP hydrolysis, probably effectuated by UreG. This chain is Urease accessory protein UreG, found in Actinobacillus pleuropneumoniae serotype 7 (strain AP76).